Here is a 229-residue protein sequence, read N- to C-terminus: Phosphatidylinositol N-acetylglucosaminyltransferase subunit GPI15 (229 aa).

The next 2 membrane-spanning stretches (helical) occupy residues 59–79 (IQYH…VICL) and 101–121 (ILII…GPSV).

It belongs to the PIGH family. As to quaternary structure, component of the phosphatidylinositol N-acetylglucosaminyltransferase (GPI-GlcNAc transferase) complex composed of at least GPI1, GPI2, GPI3, GPI15, GPI19 and ERI1.

It localises to the membrane. It catalyses the reaction a 1,2-diacyl-sn-glycero-3-phospho-(1D-myo-inositol) + UDP-N-acetyl-alpha-D-glucosamine = a 6-(N-acetyl-alpha-D-glucosaminyl)-1-(1,2-diacyl-sn-glycero-3-phospho)-1D-myo-inositol + UDP + H(+). Its pathway is glycolipid biosynthesis; glycosylphosphatidylinositol-anchor biosynthesis. In terms of biological role, part of the complex catalyzing the transfer of N-acetylglucosamine from UDP-N-acetylglucosamine to phosphatidylinositol, the first step of GPI biosynthesis. The protein is Phosphatidylinositol N-acetylglucosaminyltransferase subunit GPI15 (GPI15) of Saccharomyces cerevisiae (strain ATCC 204508 / S288c) (Baker's yeast).